The sequence spans 1224 residues: Period circadian protein (1224 aa).

Over residues 1 to 15 (MEGGESTESTHNTKV) the composition is skewed to polar residues. A disordered region spans residues 1–175 (MEGGESTEST…AAQSFPIPSP (175 aa)). A compositionally biased stretch (low complexity) spans 16 to 47 (SDSAYSNSCSNSQSQRSGSSKSRLSGSHSSGS). The short motif at 66-79 (KRNKDKSRKKKKNK) is the Nuclear localization signal element. The span at 66 to 79 (KRNKDKSRKKKKNK) shows a compositional bias: basic residues. A compositionally biased stretch (basic and acidic residues) spans 121–133 (ELQDQQHGEDHSE). PAS domains are found at residues 238–373 (DSFC…ATPI) and 391–497 (FAIR…RVFQ). Disordered regions lie at residues 632 to 764 (VTAP…GTAA), 788 to 807 (KKHR…SAND), 874 to 927 (GGSG…GPSS), 978 to 1008 (TPTS…QAAA), and 1094 to 1224 (TPAQ…HGDG). Over residues 675–693 (NFTTASNIHMSSVTNTSIA) the composition is skewed to polar residues. 26 tandem repeats follow at residues 694 to 695 (GT), 697 to 698 (GT), 699 to 700 (GT), 701 to 702 (GT), 703 to 704 (GT), 705 to 706 (GT), 707 to 708 (GT), 709 to 710 (GT), 711 to 712 (GT), 713 to 714 (GT), 715 to 716 (GT), 717 to 718 (GT), 719 to 720 (GT), 721 to 722 (GT), 723 to 724 (GT), 725 to 726 (GT), 727 to 728 (GT), 729 to 730 (GT), 731 to 732 (GT), 733 to 734 (GT), 735 to 736 (GT), 737 to 738 (GT), 739 to 740 (GT), 741 to 742 (GT), 743 to 744 (GN), and 745 to 746 (GT). The segment covering 694-752 (GTGGTGTGTGTGTGTGTGTGTGTGTGTGTGTGTGTGTGTGTGTGTGTGTGNGTNSGTGT) has biased composition (gly residues). Positions 694 to 754 (GTGGTGTGTG…GTNSGTGTGT (61 aa)) are 30 X 2 AA approximate tandem repeats of G-[TN]. One copy of the 27; approximate repeat lies at 747–748 (NS). Tandem repeats lie at residues 749-750 (GT), 751-752 (GT), and 753-754 (GT). The tract at residues 749 to 868 (GTGTGTASSS…GTGGVGSGGA (120 aa)) is regulates the rhythm of species-specific courtship song. The span at 794 to 805 (RGRTGEKSKKSA) shows a compositional bias: basic and acidic residues. Residues 895–907 (GTPGGAGGGGGAG) show a composition bias toward gly residues. Over residues 908–927 (AAAAAGASSSVGSSTPGPSS) the composition is skewed to low complexity. 2 stretches are compositionally biased toward polar residues: residues 1094-1117 (TPAQ…SSAA) and 1143-1154 (PPCSSSNPANNK). A compositionally biased stretch (low complexity) spans 1158-1177 (DSNGNSDDMDGSSFSSFYSS). Positions 1209–1224 (KIMEHPEEDQTQHGDG) are enriched in basic and acidic residues.

In terms of assembly, forms a heterodimer with timeless (TIM); the complex then translocates into the nucleus. A proportion of the protein exists as homodimer. Phosphorylated with a circadian rhythmicity, probably by the double-time protein (dbt). Phosphorylation could be implicated in the stability of per monomer and in the formation of heterodimer per-tim. In terms of tissue distribution, expressed in neural tissues and in several nonneural tissues of the abdomen. Malpighian tubules contain a circadian pacemaker that functions independently of the brain. Expression oscillates in all tissues studied except for the ovary. PER-A isoforms are mainly expressed in adult's head.

It localises to the nucleus. The protein localises to the cytoplasm. Its subcellular location is the perinuclear region. It is found in the cytosol. Its function is as follows. Essential for biological clock functions. Determines the period length of circadian and ultradian rhythms; an increase in PER dosage leads to shortened circadian rhythms and a decrease leads to lengthened circadian rhythms. Essential for the circadian rhythmicity of locomotor activity, eclosion behavior, and for the rhythmic component of the male courtship song that originates in the thoracic nervous system. The biological cycle depends on the rhythmic formation and nuclear localization of the TIM-PER complex. Light induces the degradation of TIM, which promotes elimination of PER. Nuclear activity of the heterodimer coordinatively regulates PER and TIM transcription through a negative feedback loop. Behaves as a negative element in circadian transcriptional loop. Does not appear to bind DNA, suggesting indirect transcriptional inhibition. Required for binding of cwo to the E box regions in the promoters of target genes of the transcriptional activator Clock, probably by binding to Clock-cycle heterodimers, reducing their affinity for E box binding and allowing cwo to bind instead. The polypeptide is Period circadian protein (per) (Drosophila melanogaster (Fruit fly)).